Consider the following 122-residue polypeptide: Large ribosomal subunit protein uL14c (122 aa).

Belongs to the universal ribosomal protein uL14 family. Part of the 50S ribosomal subunit.

It is found in the plastid. It localises to the chloroplast. Functionally, binds to 23S rRNA. The sequence is that of Large ribosomal subunit protein uL14c from Anthoceros angustus (Hornwort).